The following is a 37-amino-acid chain: Omega-sparatoxin-Hv1a (37 aa).

3 disulfide bridges follow: Cys-4–Cys-18, Cys-11–Cys-23, and Cys-17–Cys-33.

Expressed by the venom gland.

The protein localises to the secreted. Blocks calcium channels (Cav). This is Omega-sparatoxin-Hv1a from Heteropoda venatoria (Brown huntsman spider).